Reading from the N-terminus, the 156-residue chain is Ribosomal RNA large subunit methyltransferase H (156 aa).

Residues L72, G104, and 123–128 each bind S-adenosyl-L-methionine; that span reads LGKMVW.

The protein belongs to the RNA methyltransferase RlmH family. Homodimer.

It is found in the cytoplasm. It carries out the reaction pseudouridine(1915) in 23S rRNA + S-adenosyl-L-methionine = N(3)-methylpseudouridine(1915) in 23S rRNA + S-adenosyl-L-homocysteine + H(+). Its function is as follows. Specifically methylates the pseudouridine at position 1915 (m3Psi1915) in 23S rRNA. In Roseobacter denitrificans (strain ATCC 33942 / OCh 114) (Erythrobacter sp. (strain OCh 114)), this protein is Ribosomal RNA large subunit methyltransferase H.